The primary structure comprises 631 residues: 1-deoxy-D-xylulose-5-phosphate synthase (631 aa).

Thiamine diphosphate is bound by residues histidine 73 and 114–116 (SHA). Aspartate 145 is a binding site for Mg(2+). Thiamine diphosphate-binding positions include 146 to 147 (GA), asparagine 175, tyrosine 286, and glutamate 368. Asparagine 175 contacts Mg(2+).

It belongs to the transketolase family. DXPS subfamily. Homodimer. Mg(2+) is required as a cofactor. The cofactor is thiamine diphosphate.

It catalyses the reaction D-glyceraldehyde 3-phosphate + pyruvate + H(+) = 1-deoxy-D-xylulose 5-phosphate + CO2. It participates in metabolic intermediate biosynthesis; 1-deoxy-D-xylulose 5-phosphate biosynthesis; 1-deoxy-D-xylulose 5-phosphate from D-glyceraldehyde 3-phosphate and pyruvate: step 1/1. Functionally, catalyzes the acyloin condensation reaction between C atoms 2 and 3 of pyruvate and glyceraldehyde 3-phosphate to yield 1-deoxy-D-xylulose-5-phosphate (DXP). The chain is 1-deoxy-D-xylulose-5-phosphate synthase from Nocardia farcinica (strain IFM 10152).